Consider the following 1028-residue polypeptide: Formin-like protein 3 (1028 aa).

The N-myristoyl glycine moiety is linked to residue Gly2. In terms of domain architecture, GBD/FH3 spans Met26–Glu472. Thr95 is modified (phosphothreonine). Position 174 is a phosphoserine (Ser174). The segment at Glu493–Pro541 is disordered. Residues Pro508–Pro541 are compositionally biased toward pro residues. The region spanning Ile561–Ala951 is the FH2 domain. The region spanning Tyr986 to Cys1018 is the DAD domain. Ser1014 bears the Phosphoserine mark.

This sequence belongs to the formin homology family. As to quaternary structure, interacts with SRGAP2 (via SH3 domain). In terms of tissue distribution, expressed in endothelial cells.

Its subcellular location is the cytoplasm. It is found in the cell membrane. Functionally, plays a role in the regulation of cell morphology and cytoskeletal organization. Required in the control of cell shape and migration. Required for developmental angiogenesis. In this process, required for microtubule reorganization and for efficient endothelial cell elongation. In quiescent endothelial cells, triggers rearrangement of the actin cytoskeleton, but does not alter microtubule alignement. This chain is Formin-like protein 3 (FMNL3), found in Homo sapiens (Human).